The sequence spans 476 residues: tRNA(Ile)-lysidine synthase (476 aa).

30–35 (SGGPDS) serves as a coordination point for ATP.

The protein belongs to the tRNA(Ile)-lysidine synthase family.

It is found in the cytoplasm. It carries out the reaction cytidine(34) in tRNA(Ile2) + L-lysine + ATP = lysidine(34) in tRNA(Ile2) + AMP + diphosphate + H(+). Ligates lysine onto the cytidine present at position 34 of the AUA codon-specific tRNA(Ile) that contains the anticodon CAU, in an ATP-dependent manner. Cytidine is converted to lysidine, thus changing the amino acid specificity of the tRNA from methionine to isoleucine. The chain is tRNA(Ile)-lysidine synthase from Bacillus anthracis.